We begin with the raw amino-acid sequence, 1036 residues long: MESWLGRLWLCMMLLLPLPQPCQDQELFGPSHQLPSEEGQVPEGLWGPWGRWASCSQPCGVGVQRRSRTCELHPALPLPPRPPRHPEAHRPRGQGSRPQTPRDPQSLYRPQPRGRGGPLRAPASQVGREETQEPQGAQRFRVRDPIKPGMFGYGRVPFALPLHRSRRHPHRPGQPKNSSTGEGMVPSQPPSTELASEKHGPHMQPPEPRSHSAETPRSGTAQTEVLPRTSSAPSYTGTPAPTSSFGDSRSFQGSLGPRMPPSPGSWSSPQGAERRHPPPFSPVPRSQQSRRHWRPPGPHRSPDGWLPLTRDSSPLWSIFAPSIPAPNCSGESEQMRACSQEPCPPEQPDPRALQCAAFDSQEFMGQLYQWEPFTEVQGSQRCELNCRPRGFRFYVRHTEKVQDGTLCQPGSLDICVAGRCLSPGCDGVLGSGRRPDGCGVCGGDGSTCRLVSGNLTDRGGPLGYQKILWIPAGASHLHISQLRPSSNYLALRGPGGRSIINGNWAVDPPGSYTAIGTVFQYNRPPREEGKGESLSAEGPTTQPVDVYMIFQEDNPGVFYQYVISSPPAVLESPSTKPPALQPQPEMLRGEPLLPSAPRPVRAPGTLQRQVRIPQVPPPTRVRTAMGSSAGYWKQVGHSECSASCGKGVWHPIFLCISRESGEELDEQSCAVGARPPASPEPCHGPPCPPYWEAGEWTSCSRSCGPGTQHRQLLCRQEFGGGGSSVPPERCGHLPRPNITQPCQLHLCGHWEISSPWSQCSVRCGRGQRSRQVRCVGSNGDEVDKQECASGPPPPPSREACDMGPCTTAWFYSDWSSKCSAECGTGIQRRAVVCLRSGETLQGDPEAGSTEQGCPLRSRPPDMRACSLGPCERTWRWFTGPWSECSSECGSGTQHRDIICVSKLGAEFNVTSPSNCSHLPRPPALQPCQGQACEDKWFSTLWSPCSRSCQGGMQTREVQCLSGNQTLSSRCPPHLRPSRKRPCNSQPCNQRPDDQCKDSSPHCPLVVQARLCVYPYYTTTCCRSCAHVLEQSQLEPA.

The signal sequence occupies residues 1–24; sequence MESWLGRLWLCMMLLLPLPQPCQD. In terms of domain architecture, TSP type-1 1 spans 47-91; that stretch reads GPWGRWASCSQPCGVGVQRRSRTCELHPALPLPPRPPRHPEAHRP. 2 disordered regions span residues 73 to 149 and 163 to 308; these read HPAL…IKPG and HRSR…WLPL. Over residues 163 to 173 the composition is skewed to basic residues; the sequence is HRSRRHPHRPG. Polar residues predominate over residues 215–253; the sequence is TPRSGTAQTEVLPRTSSAPSYTGTPAPTSSFGDSRSFQG. N-linked (GlcNAc...) asparagine glycosylation is found at asparagine 454 and asparagine 737. 5 consecutive TSP type-1 domains span residues 687–748, 750–804, 805–871, 872–931, and 932–988; these read CPPY…HLCG, WEIS…DMGP, CTTA…GPCE, RTWR…QGQA, and CEDK…QPCN. Residues 991–1028 form the PLAC domain; it reads PDDQCKDSSPHCPLVVQARLCVYPYYTTTCCRSCAHVL.

Interacts with CTSB. Interacts with FBN1. In terms of processing, glycosylated. Can be O-fucosylated by POFUT2 on a serine or a threonine residue found within the consensus sequence C1-X(2)-(S/T)-C2-G of the TSP type-1 repeat domains where C1 and C2 are the first and second cysteine residue of the repeat, respectively. Fucosylated repeats can then be further glycosylated by the addition of a beta-1,3-glucose residue by the glucosyltransferase, B3GALTL. Fucosylation mediates the efficient secretion of ADAMTS family members. Can also be C-glycosylated with one or two mannose molecules on tryptophan residues within the consensus sequence W-X-X-W of the TPRs, and N-glycosylated. These other glycosylations can also facilitate secretion. Widely expressed in a range of tissues. Especially prevalent in brain, spinal cord, muscle, lung and heart.

It localises to the secreted. It is found in the extracellular space. Its subcellular location is the extracellular matrix. Functionally, positive regulation of apoptosis. May facilitate FBN1 microfibril biogenesis. The polypeptide is ADAMTS-like protein 4 (Mus musculus (Mouse)).